We begin with the raw amino-acid sequence, 473 residues long: Adenosylhomocysteinase (473 aa).

Residues 58 to 62 (HMTIQ), D135, and E197 contribute to the substrate site. NAD(+) is bound at residue 198–200 (TTT). Substrate is bound by residues K227 and D231. Residues N232, V265, E284, N319, 340-342 (IGH), and N385 each bind NAD(+). Substrate is bound at residue H342. H392 provides a ligand contact to substrate. Residues K467 and Y471 each coordinate NAD(+).

It belongs to the adenosylhomocysteinase family. In terms of assembly, homotetramer; dimer of dimers. NAD(+) serves as cofactor.

Its subcellular location is the cytoplasm. The catalysed reaction is S-adenosyl-L-homocysteine + H2O = L-homocysteine + adenosine. It functions in the pathway amino-acid biosynthesis; L-homocysteine biosynthesis; L-homocysteine from S-adenosyl-L-homocysteine: step 1/1. Its function is as follows. May play a key role in the regulation of the intracellular concentration of adenosylhomocysteine, which is a strong inhibitor of SAM-dependent methyltransferases. Catalyzes the hydrolysis of S-adenosyl-L-homocysteine into L-homocysteine and adenosine. The polypeptide is Adenosylhomocysteinase (Bradyrhizobium elkanii).